Reading from the N-terminus, the 252-residue chain is tRNA pseudouridine synthase A (252 aa).

Asp-52 serves as the catalytic Nucleophile. Tyr-110 is a substrate binding site.

It belongs to the tRNA pseudouridine synthase TruA family. Homodimer.

It catalyses the reaction uridine(38/39/40) in tRNA = pseudouridine(38/39/40) in tRNA. In terms of biological role, formation of pseudouridine at positions 38, 39 and 40 in the anticodon stem and loop of transfer RNAs. This is tRNA pseudouridine synthase A from Blochmanniella floridana.